Consider the following 942-residue polypeptide: MORC family CW-type zinc finger protein 3 (942 aa).

Residues K191, K205, K280, and K293 each participate in a glycyl lysine isopeptide (Lys-Gly) (interchain with G-Cter in SUMO2) cross-link. Residues 326-353 (AYEKVGCQLKANNMGVGVVGIIECNFLK) are nuclear matrix binding. A CW-type zinc finger spans residues 404–454 (KRPDQTWVQCDACLKWRKLPDGIDQLPEKWYCSNNPDPQFRNCEVPEEPED). Residues C413, C416, C435, and C446 each coordinate Zn(2+). The RNA binding stretch occupies residues 503-594 (SFSPVKESVP…ENSTPKPAVD (92 aa)). Phosphoserine is present on residues S517 and S543. A Glycyl lysine isopeptide (Lys-Gly) (interchain with G-Cter in SUMO2) cross-link involves residue K558. S563 carries the post-translational modification Phosphoserine. Residue K604 forms a Glycyl lysine isopeptide (Lys-Gly) (interchain with G-Cter in SUMO1); alternate linkage. Residue K604 forms a Glycyl lysine isopeptide (Lys-Gly) (interchain with G-Cter in SUMO2); alternate linkage. Residues 623-654 (PKPCVQASSTSTSTSRSDPGITVSTQTDAPGL) form a disordered region. Low complexity predominate over residues 630–639 (SSTSTSTSRS). Glycyl lysine isopeptide (Lys-Gly) (interchain with G-Cter in SUMO1); alternate cross-links involve residues K657, K658, and K743. Residues K657, K658, and K743 each participate in a glycyl lysine isopeptide (Lys-Gly) (interchain with G-Cter in SUMO2); alternate cross-link. A coiled-coil region spans residues 696-874 (SHQLQELRSE…KSTGQQAAAD (179 aa)). Position 768 is a phosphoserine (S768). Residue K797 forms a Glycyl lysine isopeptide (Lys-Gly) (interchain with G-Cter in SUMO1); alternate linkage. A Glycyl lysine isopeptide (Lys-Gly) (interchain with G-Cter in SUMO2); alternate cross-link involves residue K797.

As to quaternary structure, homodimer. The sumoylated form interacts with PML (via SUMO-interacting motif). Interacts with TP53. Sumoylation is involved in interaction with PML and localization to PML nuclear bodies.

The protein resides in the nucleus. It localises to the nucleoplasm. It is found in the nucleus matrix. The protein localises to the PML body. Its subcellular location is the chromosome. With respect to regulation, dimerization of the ATPase domain is strictly required for the catalytic activity and binding to double-stranded DNA. Disrupting the interface between ATPase and the CW domains releases autoinhibition since the CW domain sterically impedes binding of the ATPase domain to DNA. Functionally, nuclear matrix protein which forms MORC3-NBs (nuclear bodies) via an ATP-dependent mechanism and plays a role in innate immunity by restricting different viruses through modulation of the IFN response. Mechanistically, possesses a primary antiviral function through a MORC3-regulated element that activates IFNB1, and this function is guarded by a secondary IFN-repressing function. Sumoylated MORC3-NBs associates with PML-NBs and recruits TP53 and SP100, thus regulating TP53 activity. Binds RNA in vitro. Histone methylation reader which binds to non-methylated (H3K4me0), monomethylated (H3K4me1), dimethylated (H3K4me2) and trimethylated (H3K4me3) 'Lys-4' on histone H3. The order of binding preference is H3K4me3 &gt; H3K4me2 &gt; H3K4me1 &gt; H3K4me0. In Mus musculus (Mouse), this protein is MORC family CW-type zinc finger protein 3.